Reading from the N-terminus, the 208-residue chain is Protein-L-isoaspartate O-methyltransferase (208 aa).

Ser59 is an active-site residue.

This sequence belongs to the methyltransferase superfamily. L-isoaspartyl/D-aspartyl protein methyltransferase family.

It is found in the cytoplasm. It catalyses the reaction [protein]-L-isoaspartate + S-adenosyl-L-methionine = [protein]-L-isoaspartate alpha-methyl ester + S-adenosyl-L-homocysteine. Its function is as follows. Catalyzes the methyl esterification of L-isoaspartyl residues in peptides and proteins that result from spontaneous decomposition of normal L-aspartyl and L-asparaginyl residues. It plays a role in the repair and/or degradation of damaged proteins. The sequence is that of Protein-L-isoaspartate O-methyltransferase from Citrobacter koseri (strain ATCC BAA-895 / CDC 4225-83 / SGSC4696).